Here is a 729-residue protein sequence, read N- to C-terminus: MAHTRTFTSRNRSVSLSNPSFSIDGFDNSTVTLGYTGPLRTQRIRPPLVQMSGPIHSTRRTEPLFSPSPQESPDSSSTVDVPPEDDFVFKNANLLRSGQLGMCNDPYCTTCPSYYNRQAAQLHTSRVSASRFRTVLYGDARGWAKRFASSVRRCLPGIMNPHSKFVQVWTRVLAFSSLVAIFIDPLFFFLLLIQQDNKCIAIDWRATKVLVSLRSITDLIFFINILLQFRLAYVAPESRIVGAGQLVDHPRKIARHYFRGKFLLDMFIVFPIPQIMILRIIPLHLGTRREESEKQILRATVLFQYIPKLYRLLPLLAGQTSTGFIFESAWANFVINLLTFMLAGHAVGSCWYLSALQRVKKCMLNAWNISADERRNLIDCARGSYASKSQRDLWRDNASVNACFQENGYTYGIYLKAVNLTNESSFFTRFSYSLYWGFQQISTLAGNLSPSYSVGEVFFTMGIIGLGLLLFARLIGNMHNFLQSLDRRRMEMMLRKRDVEQWMSHRRLPEDIRKRVREVERYTWAATRGVNEELLFENMPDDLQRDIRRHLFKFLKKVRIFSLMDESVLDSIRERLKQRTYIRSSTVLHHRGLVEKMVFIVRGEMESIGEDGSVLPLSEGDVCGEELLTWCLSSINPDGTRIKMPPKGLVSNRNVRCVTNVEAFSLSVADLEDVTSLFSRFLRSHRVQGAIRYESPYWRLRAAMQIQVAWRYRKRQLQRLNTAHSNSNR.

Over 1–172 the chain is Cytoplasmic; it reads MAHTRTFTSR…SKFVQVWTRV (172 aa). Residues 52-82 are disordered; that stretch reads SGPIHSTRRTEPLFSPSPQESPDSSSTVDVP. The span at 67–81 shows a compositional bias: low complexity; the sequence is PSPQESPDSSSTVDV. A helical membrane pass occupies residues 173-193; the sequence is LAFSSLVAIFIDPLFFFLLLI. Residues 194–208 lie on the Extracellular side of the membrane; that stretch reads QQDNKCIAIDWRATK. Residues 209 to 229 form a helical membrane-spanning segment; it reads VLVSLRSITDLIFFINILLQF. Over 230-261 the chain is Cytoplasmic; sequence RLAYVAPESRIVGAGQLVDHPRKIARHYFRGK. Residues 262 to 282 traverse the membrane as a helical segment; it reads FLLDMFIVFPIPQIMILRIIP. Residues 283-295 are Extracellular-facing; it reads LHLGTRREESEKQ. The helical transmembrane segment at 296 to 316 threads the bilayer; the sequence is ILRATVLFQYIPKLYRLLPLL. Residues 317–332 are Cytoplasmic-facing; that stretch reads AGQTSTGFIFESAWAN. A helical transmembrane segment spans residues 333–353; sequence FVINLLTFMLAGHAVGSCWYL. The Extracellular portion of the chain corresponds to 354–451; that stretch reads SALQRVKKCM…STLAGNLSPS (98 aa). Residues 452 to 472 form a helical membrane-spanning segment; it reads YSVGEVFFTMGIIGLGLLLFA. Residues 473-729 are Cytoplasmic-facing; the sequence is RLIGNMHNFL…LNTAHSNSNR (257 aa). Residues 560–677 and Glu-625 contribute to the a nucleoside 3',5'-cyclic phosphate site; that span reads IFSL…VTSL. Positions 678–694 are calmodulin-binding; that stretch reads FSRFLRSHRVQGAIRYE. In terms of domain architecture, IQ spans 699 to 728; it reads RLRAAMQIQVAWRYRKRQLQRLNTAHSNSN.

It belongs to the cyclic nucleotide-gated cation channel (TC 1.A.1.5) family. In terms of assembly, homotetramer or heterotetramer.

Its subcellular location is the cell membrane. Functionally, putative cyclic nucleotide-gated ion channel. This chain is Putative cyclic nucleotide-gated ion channel 19 (CNGC19), found in Arabidopsis thaliana (Mouse-ear cress).